Reading from the N-terminus, the 323-residue chain is uncharacterized protein (323 aa).

3 helical membrane passes run 8–28, 32–52, and 92–112; these read FLVIILVFLAVILTELIMFME, LTLLKCFIFVDLLLVFIPFSL, and ITIFWVYTIWNGLNSIFCGIF.

It is found in the mitochondrion membrane. This is an uncharacterized protein from Neurospora crassa (strain ATCC 24698 / 74-OR23-1A / CBS 708.71 / DSM 1257 / FGSC 987).